The sequence spans 225 residues: Ribonuclease 3 (225 aa).

The 130-residue stretch at 4–133 (FEKLETLLGY…LIAAIYLDSN (130 aa)) folds into the RNase III domain. Glu-46 serves as a coordination point for Mg(2+). Residue Asp-50 is part of the active site. Mg(2+) is bound by residues Asn-119 and Glu-122. Glu-122 is an active-site residue. In terms of domain architecture, DRBM spans 158-225 (DPKTALQEWA…AARSLLHRLK (68 aa)).

The protein belongs to the ribonuclease III family. Homodimer. Mg(2+) serves as cofactor.

It localises to the cytoplasm. It catalyses the reaction Endonucleolytic cleavage to 5'-phosphomonoester.. In terms of biological role, digests double-stranded RNA. Involved in the processing of primary rRNA transcript to yield the immediate precursors to the large and small rRNAs (23S and 16S). Processes some mRNAs, and tRNAs when they are encoded in the rRNA operon. Processes pre-crRNA and tracrRNA of type II CRISPR loci if present in the organism. The protein is Ribonuclease 3 of Rickettsia prowazekii (strain Madrid E).